The primary structure comprises 456 residues: E3 ubiquitin-protein ligase RNF25 (456 aa).

The region spanning 18–127 (SEVEVLESIY…EKGKEILTDN (110 aa)) is the RWD domain. Positions 134, 137, 152, 154, 157, 160, 195, and 198 each coordinate Zn(2+). The segment at 134–199 (CVICLYGFQE…AVGVQCPVCR (66 aa)) adopts an RING-type zinc-finger fold. Positions 269–456 (LEPESAVDVS…PLGLESEEGS (188 aa)) are disordered. Polar residues predominate over residues 288 to 332 (SAEQSTSLADQSTLPTSLPMTTQYTYEKTSGAGPNQQRPGETQKS). Composition is skewed to basic and acidic residues over residues 364-388 (SEIHELPPPEKPLKETVDLKAEPRN) and 410-421 (RTRDCARWERSK).

This sequence belongs to the RNF25 family. In terms of assembly, interacts with UBE2D2, and may also interact with UBE2E1 and UBE2E3. Interacts with RELA/p65. Post-translationally, ubiquitinated; autoubiquitinated. Ubiquitous.

The protein localises to the cytoplasm. The enzyme catalyses S-ubiquitinyl-[E2 ubiquitin-conjugating enzyme]-L-cysteine + [acceptor protein]-L-lysine = [E2 ubiquitin-conjugating enzyme]-L-cysteine + N(6)-ubiquitinyl-[acceptor protein]-L-lysine.. It participates in protein modification; protein ubiquitination. Functionally, E3 ubiquitin-protein ligase that plays a key role in the RNF14-RNF25 translation quality control pathway, a pathway that takes place when a ribosome has stalled during translation, and which promotes ubiquitination and degradation of translation factors on stalled ribosomes. Catalyzes ubiquitination of RPS27A in response to ribosome collisions, promoting activation of RNF14. RNF25 catalyzes ubiquitination of other ribosomal proteins on stalled ribosomes, such as RPL0, RPL1, RPL12, RPS13 and RPS17. Also involved in ubiquitination and degradation of stalled ETF1/eRF1. Independently of its function in the response to stalled ribosomes, mediates ubiquitination and subsequent proteasomal degradation of NKD2. May also stimulate transcription mediated by NF-kappa-B via its interaction with RELA/p65. This Mus musculus (Mouse) protein is E3 ubiquitin-protein ligase RNF25.